Reading from the N-terminus, the 470-residue chain is Argininosuccinate lyase (470 aa).

Belongs to the lyase 1 family. Argininosuccinate lyase subfamily.

The protein resides in the cytoplasm. The enzyme catalyses 2-(N(omega)-L-arginino)succinate = fumarate + L-arginine. Its pathway is amino-acid biosynthesis; L-arginine biosynthesis; L-arginine from L-ornithine and carbamoyl phosphate: step 3/3. The sequence is that of Argininosuccinate lyase from Mycobacterium leprae (strain Br4923).